We begin with the raw amino-acid sequence, 391 residues long: Ferrochelatase (391 aa).

Residues His-196 and Glu-281 each coordinate Fe cation.

This sequence belongs to the ferrochelatase family.

It localises to the cytoplasm. It carries out the reaction heme b + 2 H(+) = protoporphyrin IX + Fe(2+). Its pathway is porphyrin-containing compound metabolism; protoheme biosynthesis; protoheme from protoporphyrin-IX: step 1/1. In terms of biological role, catalyzes the ferrous insertion into protoporphyrin IX. The sequence is that of Ferrochelatase from Prochlorococcus marinus (strain MIT 9312).